We begin with the raw amino-acid sequence, 91 residues long: Small ribosomal subunit protein bS18 (91 aa).

The protein belongs to the bacterial ribosomal protein bS18 family. Part of the 30S ribosomal subunit. Forms a tight heterodimer with protein bS6.

In terms of biological role, binds as a heterodimer with protein bS6 to the central domain of the 16S rRNA, where it helps stabilize the platform of the 30S subunit. This chain is Small ribosomal subunit protein bS18, found in Paraburkholderia phytofirmans (strain DSM 17436 / LMG 22146 / PsJN) (Burkholderia phytofirmans).